Reading from the N-terminus, the 834-residue chain is ABC transporter A family member 11 (834 aa).

7 helical membrane-spanning segments follow: residues 35–55, 188–208, 235–255, 269–289, 297–319, 324–346, and 355–375; these read FFIL…ILNN, MPMI…ILIV, VFDY…LYSF, FLLF…LQFI, NKWL…SVAF, PLIV…LKAL, and SYTI…IYFI. An ABC transporter domain is found at 452 to 693; it reads LDKPSIIERC…YGSGYTIDII (242 aa). 495-502 provides a ligand contact to ATP; it reads GPNGSGKS. Over residues 779-789 the composition is skewed to polar residues; the sequence is KQQTNNKSNII. A disordered region spans residues 779 to 834; that stretch reads KQQTNNKSNIINNNNNNNNNNNNNNNNNNNNNNNNNNNNNNNNNTNNNTNNNQLIN. The span at 790–834 shows a compositional bias: low complexity; the sequence is NNNNNNNNNNNNNNNNNNNNNNNNNNNNNNNNNTNNNTNNNQLIN.

The protein belongs to the ABC transporter superfamily. ABCA family.

It localises to the membrane. This chain is ABC transporter A family member 11 (abcA11), found in Dictyostelium discoideum (Social amoeba).